Consider the following 806-residue polypeptide: Sucrose synthase (806 aa).

The GT-B glycosyltransferase stretch occupies residues 275 to 752; the sequence is MVFNVVILSP…GLQRIEEKYT (478 aa).

The protein belongs to the glycosyltransferase 1 family. Plant sucrose synthase subfamily.

The enzyme catalyses an NDP-alpha-D-glucose + D-fructose = a ribonucleoside 5'-diphosphate + sucrose + H(+). Functionally, sucrose-cleaving enzyme that provides UDP-glucose and fructose for various metabolic pathways. In Vicia faba (Broad bean), this protein is Sucrose synthase (SUCS).